The primary structure comprises 312 residues: Pantothenate kinase (312 aa).

97–104 (GSVAVGKS) contributes to the ATP binding site.

This sequence belongs to the prokaryotic pantothenate kinase family.

The protein localises to the cytoplasm. It carries out the reaction (R)-pantothenate + ATP = (R)-4'-phosphopantothenate + ADP + H(+). The protein operates within cofactor biosynthesis; coenzyme A biosynthesis; CoA from (R)-pantothenate: step 1/5. The chain is Pantothenate kinase from Mycolicibacterium paratuberculosis (strain ATCC BAA-968 / K-10) (Mycobacterium paratuberculosis).